The chain runs to 355 residues: S-adenosylmethionine:tRNA ribosyltransferase-isomerase (355 aa).

Belongs to the QueA family. In terms of assembly, monomer.

It localises to the cytoplasm. It carries out the reaction 7-aminomethyl-7-carbaguanosine(34) in tRNA + S-adenosyl-L-methionine = epoxyqueuosine(34) in tRNA + adenine + L-methionine + 2 H(+). The protein operates within tRNA modification; tRNA-queuosine biosynthesis. Transfers and isomerizes the ribose moiety from AdoMet to the 7-aminomethyl group of 7-deazaguanine (preQ1-tRNA) to give epoxyqueuosine (oQ-tRNA). The polypeptide is S-adenosylmethionine:tRNA ribosyltransferase-isomerase (Burkholderia ambifaria (strain ATCC BAA-244 / DSM 16087 / CCUG 44356 / LMG 19182 / AMMD) (Burkholderia cepacia (strain AMMD))).